Here is a 332-residue protein sequence, read N- to C-terminus: Methionine synthase (332 aa).

3 residues coordinate Zn(2+): His211, Cys213, and Cys296.

This sequence belongs to the archaeal MetE family. Zn(2+) is required as a cofactor.

It functions in the pathway amino-acid biosynthesis; L-methionine biosynthesis via de novo pathway. Functionally, catalyzes the transfer of a methyl group to L-homocysteine resulting in methionine formation. The physiological methyl donor is unknown. In Saccharolobus islandicus (strain Y.N.15.51 / Yellowstone #2) (Sulfolobus islandicus), this protein is Methionine synthase.